A 594-amino-acid polypeptide reads, in one-letter code: MAVEELQSIIKRCQILEEQDFKEEDFGLFQLAGQRCIEEGHTDQLLEIIQNEKNKVIIKNMGWNLVGPVVRCLLCKDKEDSKRKVYFLIFDLLVKLCNPKELLLGLLELIEEPSGKQISQSILLLLQPLQTVIQKLHNKAYSIGLALSTLWNQLSLLPVPYSKEQIQMDDYGLCQCCKALIEFTKPFVEEVIDNKENSLENEKLKDELLKFCFKSLKCPLLTAQFFEQSEEGGNDPFRYFASEIIGFLSAIGHPFPKMIFNHGRKKRTWNYLEFEEEENKQLADSMASLAYLVFVQGIHIDQLPMVLSPLYLLQFNMGHIEVFLQRTEESVISKGLELLENSLLRIEDNSLLYQYLEIKSFLTVPQGLVKVMTLCPIETLRKKSLAMLQLYINKLDSQGKYTLFRCLLNTSNHSGVEAFIIQNIKNQIDMSLKRTRNNKWFTGPQLISLLDLVLFLPEGAETDLLQNSDRIMASLNLLRYLVIKDNENDNQTGLWTELGNIENNFLKPLHIGLNMSKAHYEAEIKNSQEAQKSKDLCSITVSGEEIPNMPPEMQLKVLHSALFTFDLIESVLARVEELIEIKTKSTSEENIGIK.

Residue alanine 2 is modified to N-acetylalanine. The interval 2 to 553 (AVEELQSIIK…EEIPNMPPEM (552 aa)) is alpha-helical region with structural similarity to HEAT repeats. The important for interaction with RBX1 stretch occupies residues 300 to 594 (IDQLPMVLSP…STSEENIGIK (295 aa)).

Interacts with FKBP4 and FKBP1A. Isoform 1: Interacts with RBX1 (via RING domain). Identified in complexes that contain RBX1 plus one of the cullins CUL1, CUL2, CUL3, and CUL4A. Identified in a SCF complex composed of CUL1, RBX1, SKP1, FBXW7 and GLMN. Component of a SCF-like complex consisting of CUL7, RBX1, SKP1, FBXW8 and GLMN. Interacts with unphosphorylated MET and is released upon MET phosphorylation. In terms of processing, phosphorylated on tyrosine residues. As to expression, ubiquitous.

Regulatory component of cullin-RING-based SCF (SKP1-Cullin-F-box protein) E3 ubiquitin-protein ligase complexes. Inhibits E3 ubiquitin ligase activity by binding to RBX1 (via RING domain) and inhibiting its interaction with the E2 ubiquitin-conjugating enzyme CDC34. Inhibits RBX1-mediated neddylation of CUL1. Required for normal stability and normal cellular levels of key components of SCF ubiquitin ligase complexes, including FBXW7, RBX1, CUL1, CUL2, CUL3, CUL4A, and thereby contributes to the regulation of CCNE1 and MYC levels. Essential for normal development of the vasculature. Contributes to the regulation of RPS6KB1 phosphorylation. The polypeptide is Glomulin (GLMN) (Homo sapiens (Human)).